A 395-amino-acid polypeptide reads, in one-letter code: Tryptophan--tRNA ligase (395 aa).

Residues 8 to 10 (RPT) and 16 to 17 (GH) contribute to the ATP site. The short motif at 9-17 (PTGKLHLGH) is the 'HIGH' region element. An insert region spans residues 117-179 (RLTDLEKEFK…EIEPEILKRL (63 aa)). Residue Asp-204 participates in L-tryptophan binding. Residues 216–218 (GED), Ile-254, and 261–265 (KMSKS) contribute to the ATP site. Residues 261–265 (KMSKS) carry the 'KMSKS' region motif.

This sequence belongs to the class-I aminoacyl-tRNA synthetase family. In terms of assembly, homodimer.

The protein resides in the cytoplasm. The enzyme catalyses tRNA(Trp) + L-tryptophan + ATP = L-tryptophyl-tRNA(Trp) + AMP + diphosphate + H(+). In terms of biological role, catalyzes the attachment of tryptophan to tRNA(Trp). The chain is Tryptophan--tRNA ligase from Aquifex aeolicus (strain VF5).